The chain runs to 199 residues: Probable GTP-binding protein EngB (199 aa).

Positions 28–199 constitute an EngB-type G domain; sequence DLPEIALAGR…ESWDTILEYL (172 aa). Residues 36-43, 63-67, 81-84, 148-151, and 180-182 contribute to the GTP site; these read GRSNVGKS, GKTQL, DVPG, TKAD, and FSS. Residues Ser43 and Thr65 each coordinate Mg(2+).

Belongs to the TRAFAC class TrmE-Era-EngA-EngB-Septin-like GTPase superfamily. EngB GTPase family. Mg(2+) serves as cofactor.

Necessary for normal cell division and for the maintenance of normal septation. The polypeptide is Probable GTP-binding protein EngB (Streptococcus equi subsp. equi (strain 4047)).